The sequence spans 289 residues: Protease HtpX homolog (289 aa).

Helical transmembrane passes span 8–28 and 29–49; these read LALL…VIGG and SSGL…SWYQ. Zn(2+) is bound at residue His-132. Residue Glu-133 is part of the active site. Position 136 (His-136) interacts with Zn(2+). The next 2 membrane-spanning stretches (helical) occupy residues 151-171 and 183-203; these read VAGA…FGGI and LGVL…QLAI. Glu-208 provides a ligand contact to Zn(2+).

Belongs to the peptidase M48B family. The cofactor is Zn(2+).

The protein resides in the cell inner membrane. The protein is Protease HtpX homolog of Nostoc sp. (strain PCC 7120 / SAG 25.82 / UTEX 2576).